The following is a 494-amino-acid chain: Aspartyl/glutamyl-tRNA(Asn/Gln) amidotransferase subunit B (494 aa).

Belongs to the GatB/GatE family. GatB subfamily. As to quaternary structure, heterotrimer of A, B and C subunits.

The enzyme catalyses L-glutamyl-tRNA(Gln) + L-glutamine + ATP + H2O = L-glutaminyl-tRNA(Gln) + L-glutamate + ADP + phosphate + H(+). It carries out the reaction L-aspartyl-tRNA(Asn) + L-glutamine + ATP + H2O = L-asparaginyl-tRNA(Asn) + L-glutamate + ADP + phosphate + 2 H(+). Functionally, allows the formation of correctly charged Asn-tRNA(Asn) or Gln-tRNA(Gln) through the transamidation of misacylated Asp-tRNA(Asn) or Glu-tRNA(Gln) in organisms which lack either or both of asparaginyl-tRNA or glutaminyl-tRNA synthetases. The reaction takes place in the presence of glutamine and ATP through an activated phospho-Asp-tRNA(Asn) or phospho-Glu-tRNA(Gln). The chain is Aspartyl/glutamyl-tRNA(Asn/Gln) amidotransferase subunit B from Protochlamydia amoebophila (strain UWE25).